We begin with the raw amino-acid sequence, 239 residues long: Pimeloyl-[acyl-carrier protein] methyl ester esterase (239 aa).

Residues Trp-20, Ser-77–Met-78, and Phe-138–Gln-142 each bind substrate. Catalysis depends on Ser-77, which acts as the Nucleophile. Catalysis depends on residues Asp-192 and His-220. Residue His-220 participates in substrate binding.

This sequence belongs to the AB hydrolase superfamily. Carboxylesterase BioH family. As to quaternary structure, monomer.

It localises to the cytoplasm. It carries out the reaction 6-carboxyhexanoyl-[ACP] methyl ester + H2O = 6-carboxyhexanoyl-[ACP] + methanol + H(+). It functions in the pathway cofactor biosynthesis; biotin biosynthesis. Its function is as follows. The physiological role of BioH is to remove the methyl group introduced by BioC when the pimeloyl moiety is complete. It allows to synthesize pimeloyl-ACP via the fatty acid synthetic pathway through the hydrolysis of the ester bonds of pimeloyl-ACP esters. The protein is Pimeloyl-[acyl-carrier protein] methyl ester esterase of Legionella pneumophila (strain Corby).